Consider the following 94-residue polypeptide: Co-chaperonin GroES (94 aa).

It belongs to the GroES chaperonin family. As to quaternary structure, heptamer of 7 subunits arranged in a ring. Interacts with the chaperonin GroEL.

The protein localises to the cytoplasm. Its function is as follows. Together with the chaperonin GroEL, plays an essential role in assisting protein folding. The GroEL-GroES system forms a nano-cage that allows encapsulation of the non-native substrate proteins and provides a physical environment optimized to promote and accelerate protein folding. GroES binds to the apical surface of the GroEL ring, thereby capping the opening of the GroEL channel. The protein is Co-chaperonin GroES of Ehrlichia canis (strain Jake).